The primary structure comprises 497 residues: Cysteine--tRNA ligase (497 aa).

Zn(2+) is bound at residue C32. The short motif at 34–44 (PTVYGEGHLGH) is the 'HIGH' region element. Zn(2+) contacts are provided by C228, H253, and E257. The 'KMSKS' region motif lies at 285 to 289 (KMGKS). Position 288 (K288) interacts with ATP.

Belongs to the class-I aminoacyl-tRNA synthetase family. Monomer. Zn(2+) serves as cofactor.

The protein localises to the cytoplasm. It catalyses the reaction tRNA(Cys) + L-cysteine + ATP = L-cysteinyl-tRNA(Cys) + AMP + diphosphate. The protein is Cysteine--tRNA ligase of Cytophaga hutchinsonii (strain ATCC 33406 / DSM 1761 / CIP 103989 / NBRC 15051 / NCIMB 9469 / D465).